Consider the following 527-residue polypeptide: Zinc finger CCCH-type with G patch domain-containing protein (527 aa).

Positions 97–126 are disordered; sequence GEVSGSSSDMREREDEREEEDDGEVEGEVD. The segment covering 111 to 125 has biased composition (acidic residues); the sequence is DEREEEDDGEVEGEV. The C3H1-type zinc finger occupies 173–200; the sequence is QKSMKPCPFFLEDKCRFADNCRFSHGEV. Positions 268–312 are disordered; sequence LREDDLPSCSDSEDDDNGEGEAAFPRVLTQEEDWAPSRSSSAFGG. A G-patch domain is found at 317–363; that stretch reads TRGIGSKLMLKMGYEYGKGLGKTSEGRVEPVLAVVLPKGKSLDQCAE. Disordered stretches follow at residues 369 to 396, 410 to 444, and 505 to 527; these read TQRK…AHNT, LGNG…YKGG, and KAQE…MTEF. Positions 384 to 393 are enriched in basic residues; that stretch reads RNKRTRKARA. Positions 511–527 are enriched in basic and acidic residues; that stretch reads AQRENRKADTHKKMTEF.

Its subcellular location is the nucleus. Functionally, transcription repressor that specifically binds the 5'-GGAG[GA]A[GA]A-3' consensus sequence. Represses transcription by recruiting the chromatin multiprotein complex NuRD to target promoters. Negatively regulates expression of EGFR, a gene involved in cell proliferation, survival and migration. This is Zinc finger CCCH-type with G patch domain-containing protein (zgpat) from Salmo salar (Atlantic salmon).